The chain runs to 883 residues: Histidine--tRNA ligase, cytoplasmic (883 aa).

The protein belongs to the class-II aminoacyl-tRNA synthetase family.

The protein resides in the cytoplasm. The protein localises to the cytosol. It catalyses the reaction tRNA(His) + L-histidine + ATP = L-histidyl-tRNA(His) + AMP + diphosphate + H(+). This Arabidopsis thaliana (Mouse-ear cress) protein is Histidine--tRNA ligase, cytoplasmic.